A 187-amino-acid chain; its full sequence is ATP synthase subunit b, chloroplastic (187 aa).

The helical transmembrane segment at 34-56 (IINLSVVLGLVFTLGRNFLISLL) threads the bilayer.

Belongs to the ATPase B chain family. As to quaternary structure, F-type ATPases have 2 components, F(1) - the catalytic core - and F(0) - the membrane proton channel. F(1) has five subunits: alpha(3), beta(3), gamma(1), delta(1), epsilon(1). F(0) has four main subunits: a(1), b(1), b'(1) and c(10-14). The alpha and beta chains form an alternating ring which encloses part of the gamma chain. F(1) is attached to F(0) by a central stalk formed by the gamma and epsilon chains, while a peripheral stalk is formed by the delta, b and b' chains.

It is found in the plastid. It localises to the chloroplast thylakoid membrane. F(1)F(0) ATP synthase produces ATP from ADP in the presence of a proton or sodium gradient. F-type ATPases consist of two structural domains, F(1) containing the extramembraneous catalytic core and F(0) containing the membrane proton channel, linked together by a central stalk and a peripheral stalk. During catalysis, ATP synthesis in the catalytic domain of F(1) is coupled via a rotary mechanism of the central stalk subunits to proton translocation. Functionally, component of the F(0) channel, it forms part of the peripheral stalk, linking F(1) to F(0). This chain is ATP synthase subunit b, chloroplastic, found in Pleurastrum terricola (Filamentous green alga).